Consider the following 235-residue polypeptide: Purine nucleoside phosphorylase DeoD-type (235 aa).

His-4 serves as a coordination point for a purine D-ribonucleoside. Phosphate-binding positions include Gly-20, Arg-24, Arg-43, and Arg-87 to Thr-90. A purine D-ribonucleoside is bound by residues Glu-179 to Glu-181 and Ser-203 to Asp-204. Catalysis depends on Asp-204, which acts as the Proton donor.

It belongs to the PNP/UDP phosphorylase family. As to quaternary structure, homohexamer; trimer of homodimers.

The enzyme catalyses a purine D-ribonucleoside + phosphate = a purine nucleobase + alpha-D-ribose 1-phosphate. It carries out the reaction a purine 2'-deoxy-D-ribonucleoside + phosphate = a purine nucleobase + 2-deoxy-alpha-D-ribose 1-phosphate. Catalyzes the reversible phosphorolytic breakdown of the N-glycosidic bond in the beta-(deoxy)ribonucleoside molecules, with the formation of the corresponding free purine bases and pentose-1-phosphate. The sequence is that of Purine nucleoside phosphorylase DeoD-type from Brevibacillus brevis (strain 47 / JCM 6285 / NBRC 100599).